Reading from the N-terminus, the 335-residue chain is Phosphate acyltransferase (335 aa).

The protein belongs to the PlsX family. As to quaternary structure, homodimer. Probably interacts with PlsY.

Its subcellular location is the cytoplasm. It catalyses the reaction a fatty acyl-[ACP] + phosphate = an acyl phosphate + holo-[ACP]. The protein operates within lipid metabolism; phospholipid metabolism. In terms of biological role, catalyzes the reversible formation of acyl-phosphate (acyl-PO(4)) from acyl-[acyl-carrier-protein] (acyl-ACP). This enzyme utilizes acyl-ACP as fatty acyl donor, but not acyl-CoA. The chain is Phosphate acyltransferase from Desulfitobacterium hafniense (strain Y51).